A 592-amino-acid polypeptide reads, in one-letter code: Keratin, type II cytoskeletal 5 (592 aa).

Residues Met-1 to Ser-18 show a composition bias toward low complexity. Residues Met-1 to Ala-20 form a disordered region. Positions Met-1–Glu-169 are head. 4 positions are modified to phosphoserine: Ser-5, Ser-8, Ser-16, and Ser-21. Thr-24 is subject to Phosphothreonine; by CDK1. Ser-26, Ser-36, Ser-50, Ser-64, Ser-71, Ser-75, and Ser-82 each carry phosphoserine. Thr-153 is subject to Phosphothreonine; by CDK1. Residue Thr-168 is modified to Phosphothreonine; by AURKB. A coil 1A region spans residues Glu-170 to Leu-205. Residues Glu-170–Leu-483 form the IF rod domain. The tract at residues Gln-206–Tyr-224 is linker 1. Residues Ile-225–Gln-317 are coil 1B. Positions Thr-318 to Ile-340 are linker 12. Residues Ile-341–Glu-479 form a coil 2 region. A tail region spans residues Glu-480 to Ser-592. The disordered stretch occupies residues Gly-568–Ser-592. The span at Ser-574 to Ser-592 shows a compositional bias: low complexity.

It belongs to the intermediate filament family. In terms of assembly, heterodimer of a type I and a type II keratin. Heterodimer with type I keratin KRT25 leading to the formation of keratin intermediate filament (KIF) network. Forms a heterodimer (via 2B domains) with KRT14 (via 2B domains). Interacts with TCHP. Interacts with EPPK1. Interacts with AMELX. Interacts with PKP1 (via N-terminus) and PKP2. In terms of processing, phosphorylated by CDK1, AURKB and Rho-kinase, phosphorylation is regulated by the cell cycle. Thr-24 phosphorylation, mediated by CDK1, peaks during prometaphase or metaphase cells with phosphorylated filamentous structures evident throughout the cytoplasm during early mitosis. CDK1 phosphorylates Thr-24 in mitotic cells at the site of injury. Post-translationally, O-glycosylated.

It localises to the cytoplasm. Its function is as follows. Required for the formation of keratin intermediate filaments in the basal epidermis and maintenance of the skin barrier in response to mechanical stress. Regulates the recruitment of Langerhans cells to the epidermis, potentially by modulation of the abundance of macrophage chemotactic cytokines, macrophage inflammatory cytokines and CTNND1 localization in keratinocytes. The polypeptide is Keratin, type II cytoskeletal 5 (KRT5) (Pan troglodytes (Chimpanzee)).